Here is a 328-residue protein sequence, read N- to C-terminus: Phosphoserine phosphatase (328 aa).

Asp-113 functions as the Nucleophile in the catalytic mechanism. Asp-113 and Asp-115 together coordinate Mg(2+). Asp-115 functions as the Proton donor in the catalytic mechanism. Residues Glu-122, Arg-158, 201-202 (SG), and Lys-246 each bind substrate. Asp-269 serves as a coordination point for Mg(2+). Asn-272 contacts substrate.

The protein belongs to the HAD-like hydrolase superfamily. SerB family. Mg(2+) is required as a cofactor.

It catalyses the reaction O-phospho-L-serine + H2O = L-serine + phosphate. The catalysed reaction is O-phospho-D-serine + H2O = D-serine + phosphate. Its pathway is amino-acid biosynthesis; L-serine biosynthesis; L-serine from 3-phospho-D-glycerate: step 3/3. The polypeptide is Phosphoserine phosphatase (Vibrio cholerae serotype O1 (strain ATCC 39315 / El Tor Inaba N16961)).